A 380-amino-acid chain; its full sequence is Chaperone protein DnaJ (380 aa).

A disordered region spans residues M1–K48. The J domain maps to D5–G72. Basic residues predominate over residues A24–P34. Basic and acidic residues predominate over residues D35–K48. The CR-type zinc-finger motif lies at G139 to N217. Zn(2+) contacts are provided by C152, C155, C169, C172, C191, C194, C205, and C208. 4 CXXCXGXG motif repeats span residues C152–G159, C169–G176, C191–G198, and C205–G212. Residues K357–A380 are disordered. Residues S364–A380 show a composition bias toward basic and acidic residues.

This sequence belongs to the DnaJ family. In terms of assembly, homodimer. Requires Zn(2+) as cofactor.

It localises to the cytoplasm. Its function is as follows. Participates actively in the response to hyperosmotic and heat shock by preventing the aggregation of stress-denatured proteins and by disaggregating proteins, also in an autonomous, DnaK-independent fashion. Unfolded proteins bind initially to DnaJ; upon interaction with the DnaJ-bound protein, DnaK hydrolyzes its bound ATP, resulting in the formation of a stable complex. GrpE releases ADP from DnaK; ATP binding to DnaK triggers the release of the substrate protein, thus completing the reaction cycle. Several rounds of ATP-dependent interactions between DnaJ, DnaK and GrpE are required for fully efficient folding. Also involved, together with DnaK and GrpE, in the DNA replication of plasmids through activation of initiation proteins. The protein is Chaperone protein DnaJ of Polaromonas sp. (strain JS666 / ATCC BAA-500).